We begin with the raw amino-acid sequence, 127 residues long: Small ribosomal subunit protein uS13 (127 aa).

Positions 97–127 (PVRGQRTRTNARTRRGRRVTVAGKKKAPSKK) are disordered. Residues 101–127 (QRTRTNARTRRGRRVTVAGKKKAPSKK) show a composition bias toward basic residues.

It belongs to the universal ribosomal protein uS13 family. As to quaternary structure, part of the 30S ribosomal subunit. Forms a loose heterodimer with protein S19. Forms two bridges to the 50S subunit in the 70S ribosome.

Its function is as follows. Located at the top of the head of the 30S subunit, it contacts several helices of the 16S rRNA. In the 70S ribosome it contacts the 23S rRNA (bridge B1a) and protein L5 of the 50S subunit (bridge B1b), connecting the 2 subunits; these bridges are implicated in subunit movement. Contacts the tRNAs in the A and P-sites. This chain is Small ribosomal subunit protein uS13, found in Microcystis aeruginosa (strain NIES-843 / IAM M-2473).